Consider the following 295-residue polypeptide: Protoheme IX farnesyltransferase (295 aa).

Helical transmembrane passes span 8 to 28 (VTKP…FLLA), 35 to 55 (YTLF…GCVF), 84 to 104 (VSLV…WFGA), 107 to 127 (LACW…SLYM), 132 to 152 (VYGT…GYCA), 162 to 182 (LILL…IAIF), 208 to 228 (ITLY…GGYA), 233 to 253 (LVVA…GYKV), and 264 to 284 (FVFS…DFMV).

Belongs to the UbiA prenyltransferase family. Protoheme IX farnesyltransferase subfamily.

It localises to the cell inner membrane. The enzyme catalyses heme b + (2E,6E)-farnesyl diphosphate + H2O = Fe(II)-heme o + diphosphate. It participates in porphyrin-containing compound metabolism; heme O biosynthesis; heme O from protoheme: step 1/1. In terms of biological role, converts heme B (protoheme IX) to heme O by substitution of the vinyl group on carbon 2 of heme B porphyrin ring with a hydroxyethyl farnesyl side group. This Enterobacter sp. (strain 638) protein is Protoheme IX farnesyltransferase.